Consider the following 145-residue polypeptide: Major pollen allergen Lig v 1 (145 aa).

Intrachain disulfides connect cysteine 19–cysteine 90, cysteine 22–cysteine 131, and cysteine 43–cysteine 78. N-linked (GlcNAc...) asparagine glycosylation is present at asparagine 111.

The protein belongs to the Ole e I family.

It is found in the secreted. The protein is Major pollen allergen Lig v 1 of Ligustrum vulgare (Common privet).